The chain runs to 419 residues: Synaptosomal-associated protein 47 (419 aa).

T-SNARE coiled-coil homology domains are found at residues 108 to 170 and 356 to 418; these read PQGA…LSEL and VLQP…MRKL.

It belongs to the SVAP1 family.

Functionally, may play a role in intracellular membrane fusion. This is Synaptosomal-associated protein 47 (snap47) from Danio rerio (Zebrafish).